Consider the following 548-residue polypeptide: Chaperonin GroEL (548 aa).

ATP contacts are provided by residues 30-33 (TLGP), Lys51, 87-91 (DGTTT), Gly415, and Asp496.

Belongs to the chaperonin (HSP60) family. Forms a cylinder of 14 subunits composed of two heptameric rings stacked back-to-back. Interacts with the co-chaperonin GroES.

Its subcellular location is the cytoplasm. It carries out the reaction ATP + H2O + a folded polypeptide = ADP + phosphate + an unfolded polypeptide.. Together with its co-chaperonin GroES, plays an essential role in assisting protein folding. The GroEL-GroES system forms a nano-cage that allows encapsulation of the non-native substrate proteins and provides a physical environment optimized to promote and accelerate protein folding. This chain is Chaperonin GroEL, found in Haemophilus influenzae (strain ATCC 51907 / DSM 11121 / KW20 / Rd).